Reading from the N-terminus, the 283-residue chain is Nucleotide-binding protein DR_1434 (283 aa).

Residue 8–15 (GLSGSGKS) coordinates ATP. 57-60 (DTRT) lines the GTP pocket.

It belongs to the RapZ-like family.

Functionally, displays ATPase and GTPase activities. The protein is Nucleotide-binding protein DR_1434 of Deinococcus radiodurans (strain ATCC 13939 / DSM 20539 / JCM 16871 / CCUG 27074 / LMG 4051 / NBRC 15346 / NCIMB 9279 / VKM B-1422 / R1).